We begin with the raw amino-acid sequence, 166 residues long: Small ribosomal subunit protein uS5 (166 aa).

Residues 11-74 (LEDRVVAINR…DAARKNLIEV (64 aa)) enclose the S5 DRBM domain.

This sequence belongs to the universal ribosomal protein uS5 family. In terms of assembly, part of the 30S ribosomal subunit. Contacts proteins S4 and S8.

In terms of biological role, with S4 and S12 plays an important role in translational accuracy. Its function is as follows. Located at the back of the 30S subunit body where it stabilizes the conformation of the head with respect to the body. This Ligilactobacillus salivarius (strain UCC118) (Lactobacillus salivarius) protein is Small ribosomal subunit protein uS5.